A 137-amino-acid polypeptide reads, in one-letter code: Envelope glycoprotein L (137 aa).

Positions 1-25 (MRTVGVFLATCLVTIFVLPTWGNWA) are cleaved as a signal peptide. Residues 23–128 (NWAYPCCHVT…SVEDLFGANL (106 aa)) are interaction with gH. 2 disulfides stabilise this stretch: cysteine 28–cysteine 56 and cysteine 29–cysteine 79.

This sequence belongs to the herpesviridae glycoprotein L family. As to quaternary structure, interacts with glycoprotein H (gH); this interaction is necessary for the correct processing and cell surface expression of gH. The heterodimer gH/gL seems to interact with gB trimers during fusion. The heterodimer gH/gL interacts with host EPHA2 to facilitate virus internalization and fusion.

The protein localises to the virion membrane. The protein resides in the host cell membrane. It is found in the host Golgi apparatus. Its subcellular location is the host trans-Golgi network. Functionally, the heterodimer glycoprotein H-glycoprotein L is required for the fusion of viral and plasma membranes leading to virus entry into the host cell. Acts as a functional inhibitor of gH and maintains gH in an inhibited form. Upon binding to host integrins, gL dissociates from gH leading to activation of the viral fusion glycoproteins gB and gH. The heterodimer gH/gL targets also host EPHA2 to promote viral entry. This Epstein-Barr virus (strain AG876) (HHV-4) protein is Envelope glycoprotein L.